Reading from the N-terminus, the 286-residue chain is Protein PXR1 (286 aa).

The segment at 1–20 (MGLAGTKVKQRFGLDPRNTS) is disordered. The 47-residue stretch at 25-71 (KSRFGHRYLESMGWAPGKGLGLVEHATTTHVKVSVKDDTVGLGAKLA) folds into the G-patch domain. Residues 148 to 255 (EDESEVNFKS…PRKHDQISNV (108 aa)) form a disordered region. Positions 168–198 (PSRDSTSHAKRMRGDESKKSTRDQSKQERKE) are enriched in basic and acidic residues. The segment covering 199–230 (KKIKTEKKEKKEKKEKKEKKEKKEKKEKKEKK) has biased composition (basic residues).

This sequence belongs to the PINX1 family.

It is found in the nucleus. The protein resides in the nucleolus. Involved in rRNA-processing at A0, A1 and A2 sites and negatively regulates telomerase. This chain is Protein PXR1 (PXR1), found in Meyerozyma guilliermondii (strain ATCC 6260 / CBS 566 / DSM 6381 / JCM 1539 / NBRC 10279 / NRRL Y-324) (Yeast).